The following is a 92-amino-acid chain: Long neurotoxin 1 (92 aa).

Residues Met1 to Thr21 form the signal peptide. 4 disulfide bridges follow: Cys24-Cys42, Cys35-Cys63, Cys67-Cys79, and Cys80-Cys85.

It belongs to the three-finger toxin family. Long-chain subfamily. Type II alpha-neurotoxin sub-subfamily. Expressed by the venom gland.

The protein resides in the secreted. Binds with high affinity to muscular (alpha-1/CHRNA1) and neuronal (alpha-7/CHRNA7) nicotinic acetylcholine receptor (nAChR) and inhibits acetylcholine from binding to the receptor, thereby impairing neuromuscular and neuronal transmission. The polypeptide is Long neurotoxin 1 (Oxyuranus scutellatus scutellatus (Australian taipan)).